The sequence spans 341 residues: Serpentine receptor class epsilon-12 (341 aa).

Transmembrane regions (helical) follow at residues 30–50 (TAFYVADTINMMFYIWVLFSA), 57–77 (FTLVSGTQYVIHFFDNLAIIV), 101–121 (AMTFSVYCIVAAMCSLPFSIL), 140–160 (YISYALVFLLNFIGIIGAILL), 167–187 (IFVVAFLMILNLFALLTNQFL), 230–250 (LNFIILYMGFMNVCLVISVLF), and 262–282 (ICSLALDASIFFYSFAIPQIM).

Belongs to the nematode receptor-like protein sre family.

It is found in the membrane. This chain is Serpentine receptor class epsilon-12 (sre-12), found in Caenorhabditis elegans.